The chain runs to 146 residues: MGAFTEKQEALVNSSWEAFKGNIPQYSVVFYTSILEKAPAAKNLFSFLANGVDPTNPKLTAHAESLFGLVRDSAAQLRANGAVVADAALGSIHSQKGVNDSQFLVVKEALLKTLKEAVGDKWTDELSTALELAYDELAAAIKKAYA.

A Globin domain is found at 3–146 (AFTEKQEALV…LAAAIKKAYA (144 aa)). 2 positions are modified to nitrated tyrosine: Tyr-26 and Tyr-31. Residue Ser-46 participates in heme b binding. Ser-46 bears the Phosphoserine mark. His-62 is an O2 binding site. Residues His-93 and Lys-96 each coordinate heme b. Tyr-134 carries the post-translational modification Nitrated tyrosine.

Belongs to the plant globin family. As to quaternary structure, monomer. Post-translationally, nitrated mainly at Tyr-31 and, to a lower extent, at Tyr-26 and Tyr-134, in effective nodules and particularly in hypoxic conditions; this mechanism may play a protective role in the symbiosis by buffering toxic peroxynitrite NO(2)(-). Nitration level decrease during nodule senescence. In terms of processing, phosphorylation at Ser-46 disrupts the molecular environment of its porphyrin ring oxygen binding pocket, thus leading to a reduced oxygen consumption and to the delivery of oxygen O(2) to symbiosomes. In terms of tissue distribution, root nodules.

The protein localises to the cytoplasm. It localises to the cytosol. Its subcellular location is the nucleus. In terms of biological role, leghemoglobin that reversibly binds oxygen O(2) through a pentacoordinated heme iron. In root nodules, facilitates the diffusion of oxygen to the bacteroids while preventing the bacterial nitrogenase from being inactivated by buffering dioxygen, nitric oxide and carbon monoxide, and promoting the formation of reactive oxygen species (ROS, e.g. H(2)O(2)). This role is essential for symbiotic nitrogen fixation (SNF). The sequence is that of Leghemoglobin alpha from Phaseolus vulgaris (Kidney bean).